A 319-amino-acid polypeptide reads, in one-letter code: Protein SICKLE (319 aa).

Disordered regions lie at residues 1–59 (MEDS…TQRF), 71–239 (SFKK…PGAE), and 262–299 (CSDA…SNQQ). Composition is skewed to polar residues over residues 27–56 (TTGT…SFET) and 78–88 (PKQQYISSPSH). Pro residues predominate over residues 93 to 103 (PVPPQFPPSVP). Residues 185–210 (SYNNTPPQFSNYGRQNANWGGNTYPN) are compositionally biased toward polar residues. A compositionally biased stretch (basic and acidic residues) spans 228-238 (DGGRRPMEPGA). The span at 285–299 (SVTSEATHKTSSNQQ) shows a compositional bias: polar residues.

In terms of assembly, interacts with ubiquitin thioesterases UBP12 and UBP13, and with protein phosphatase 2A subunits PP2AB1, PP2AB2, PP2A3, PP2A4, PP2AA1 and PP2AA2. As to expression, expressed in the shoot apical meristem (SAM), embryos, seedlings, root tips, and root and leaf primordia.

Its subcellular location is the nucleus. It localises to the cytoplasm. The protein localises to the cytosol. Functionally, involved in miRNAs and siRNAs biogenesis and thus promotes gene silencing. Modulates auxin (IAA) transport-related developmental programs by regulating protein phosphatase 2A (PP2As)-driven auxin efflux carrier PIN proteins recycling and polarity. Required during development. Necessary for abiotic stress (e.g. chilling and salt) tolerance. This chain is Protein SICKLE, found in Arabidopsis thaliana (Mouse-ear cress).